The chain runs to 587 residues: Solute carrier family 13 member 2 (587 aa).

Transmembrane regions (helical) follow at residues 13–33 (FYLIVLCLPIFLLPLPLIVQT), 53–73 (ALPLAVTALFPIVLFPLMGIM), 86–106 (TNILFVGGLMVAIAVEHWNLH), and 136–156 (SMWISNTATTAMMVPIGHAVL). The tract at residues 188–208 (KLDNGQPVSAPSEPRTQKTQE) is disordered. Helical transmembrane passes span 264-284 (FAFPTMIILLLLAWLWLQVLF), 329-349 (VLFVLLVVLWFTREPGFFPGW), 367-387 (TVAIFISLVMFIIPSKIPGLM), 407-427 (TVNDKMPWNIVILLGGGFALA), 445-465 (PLQHIPPSATAVILCLLIAIF), 477-497 (LFLPILASMAQAICLHPLYVM), 506-526 (LAFMLPVATPPNAIVFSFGGL), and 535-555 (GFLLNIIGVLAITLSINSWSI).

It belongs to the SLC13A/DASS transporter (TC 2.A.47) family. NADC subfamily. Expressed in large and small intestine and in the kidney proximal tubules.

It is found in the apical cell membrane. It catalyses the reaction succinate(out) + 3 Na(+)(out) = succinate(in) + 3 Na(+)(in). It carries out the reaction fumarate(out) + 3 Na(+)(out) = fumarate(in) + 3 Na(+)(in). The catalysed reaction is 2-oxoglutarate(out) + 3 Na(+)(out) = 2-oxoglutarate(in) + 3 Na(+)(in). Its activity is regulated as follows. Li(+) decreases succinate transport in the presence of Na(+), by competing at one of the three cation binding sites. Low-affinity sodium-dicarboxylate cotransporter, that mediates the entry of citric acid cycle intermediates, such as succinate, citrate, fumarate and alpha-ketoglutarate (2-oxoglutarate) into the small intestine and renal proximal tubule. Transports the dicarboxylate into the cell with a probable stoichiometry of 3 Na(+) for 1 divalent dicarboxylate, rendering the process electrogenic. Citrate is transported in protonated form as a divalent anion, rather than the trivalent form which is normally found in blood. Has a critical role in renal dicarboxylate transport. In Rattus norvegicus (Rat), this protein is Solute carrier family 13 member 2 (Slc13a2).